The sequence spans 289 residues: Glucosamine-6-phosphate deaminase 1 (289 aa).

K64 carries the N6-acetyllysine modification. Residue D72 is the Proton acceptor; for enolization step of the active site. Catalysis depends on D141, which acts as the For ring-opening step. H143 serves as the catalytic Proton acceptor; for ring-opening step. E148 functions as the For ring-opening step in the catalytic mechanism. Phosphothreonine is present on T161.

It belongs to the glucosamine/galactosamine-6-phosphate isomerase family. As to quaternary structure, homohexamer.

It is found in the cytoplasm. The enzyme catalyses alpha-D-glucosamine 6-phosphate + H2O = beta-D-fructose 6-phosphate + NH4(+). The protein operates within nucleotide-sugar biosynthesis; UDP-N-acetyl-alpha-D-glucosamine biosynthesis; alpha-D-glucosamine 6-phosphate from D-fructose 6-phosphate: step 1/1. Allosterically activated by N-acetylglucosamine-6-phosphate (GlcNAc6P). In terms of biological role, catalyzes the reversible conversion of alpha-D-glucosamine 6-phosphate (GlcN-6P) into beta-D-fructose 6-phosphate (Fru-6P) and ammonium ion, a regulatory reaction step in de novo uridine diphosphate-N-acetyl-alpha-D-glucosamine (UDP-GlcNAc) biosynthesis via hexosamine pathway. Deamination is coupled to aldo-keto isomerization mediating the metabolic flux from UDP-GlcNAc toward Fru-6P. At high ammonium level can drive amination and isomerization of Fru-6P toward hexosamines and UDP-GlcNAc synthesis. Has a role in fine tuning the metabolic fluctuations of cytosolic UDP-GlcNAc and their effects on hyaluronan synthesis that occur during tissue remodeling. Seems to trigger calcium oscillations in mammalian eggs. These oscillations serve as the essential trigger for egg activation and early development of the embryo. This Bos taurus (Bovine) protein is Glucosamine-6-phosphate deaminase 1.